We begin with the raw amino-acid sequence, 767 residues long: Dipeptidyl peptidase 4 (767 aa).

Residues 1–6 are Cytoplasmic-facing; it reads MKTPWK. The helical; Signal-anchor for type II membrane protein transmembrane segment at 7-28 threads the bilayer; that stretch reads VLLGLLGVAALVTIITVPVVLL. Residues 29–767 are Extracellular-facing; that stretch reads NKDEAAADSR…HFLQQCFSLR (739 aa). N-linked (GlcNAc...) asparagine glycans are attached at residues Asn-83, Asn-90, Asn-148, Asn-217, Asn-227, and Asn-319. Cystine bridges form between Cys-326-Cys-337, Cys-383-Cys-395, Cys-445-Cys-448, and Cys-455-Cys-473. Asn-521 is a glycosylation site (N-linked (GlcNAc...) asparagine). Ser-631 (charge relay system) is an active-site residue. A disulfide bond links Cys-650 and Cys-763. Asn-686 is a glycosylation site (N-linked (GlcNAc...) asparagine). Residues Asp-709 and His-741 each act as charge relay system in the active site.

This sequence belongs to the peptidase S9B family. DPPIV subfamily. In terms of assembly, monomer. Homodimer. Heterodimer with Seprase (FAP). Requires homodimerization for optimal dipeptidyl peptidase activity and T-cell costimulation. Found in a membrane raft complex, at least composed of BCL10, CARD11, DPP4 and IKBKB. Associates with collagen. Interacts with PTPRC; the interaction is enhanced in an interleukin-12-dependent manner in activated lymphocytes. Interacts (via extracellular domain) with ADA; does not inhibit its dipeptidyl peptidase activity. Interacts with CAV1 (via the N-terminus); the interaction is direct. Interacts (via cytoplasmic tail) with CARD11 (via PDZ domain); its homodimerization is necessary for interaction with CARD11. Interacts with IGF2R; the interaction is direct. Interacts with GPC3. In terms of processing, the soluble form (Dipeptidyl peptidase 4 soluble form also named SDPP) derives from the membrane form (Dipeptidyl peptidase 4 membrane form also named MDPP) by proteolytic processing. Post-translationally, N- and O-Glycosylated. Phosphorylated. Mannose 6-phosphate residues in the carbohydrate moiety are necessary for interaction with IGF2R in activated T-cells. Mannose 6-phosphorylation is induced during T-cell activation. Expressed in bile ducts and other epithelial brush borders (small intestine, kidney, colon, pancreatic duct); acinar structures in salivary glands; endothelial structures and T cell areas in thymus, spleen and lymph node.

The protein resides in the secreted. It is found in the cell membrane. Its subcellular location is the apical cell membrane. The protein localises to the cell projection. It localises to the invadopodium membrane. The protein resides in the lamellipodium membrane. It is found in the cell junction. Its subcellular location is the membrane raft. The catalysed reaction is Release of an N-terminal dipeptide, Xaa-Yaa-|-Zaa-, from a polypeptide, preferentially when Yaa is Pro, provided Zaa is neither Pro nor hydroxyproline.. With respect to regulation, inhibited by GPC3 and diprotin A. Functionally, cell surface glycoprotein receptor involved in the costimulatory signal essential for T-cell receptor (TCR)-mediated T-cell activation. Acts as a positive regulator of T-cell coactivation, by binding at least ADA, CAV1, IGF2R, and PTPRC. Its binding to CAV1 and CARD11 induces T-cell proliferation and NF-kappa-B activation in a T-cell receptor/CD3-dependent manner. Its interaction with ADA also regulates lymphocyte-epithelial cell adhesion. In association with FAP is involved in the pericellular proteolysis of the extracellular matrix (ECM), the migration and invasion of endothelial cells into the ECM. May be involved in the promotion of lymphatic endothelial cells adhesion, migration and tube formation. When overexpressed, enhanced cell proliferation, a process inhibited by GPC3. Also acts as a serine exopeptidase with a dipeptidyl peptidase activity that regulates various physiological processes by cleaving peptides in the circulation, including many chemokines, mitogenic growth factors, neuropeptides and peptide hormones. Removes N-terminal dipeptides sequentially from polypeptides having unsubstituted N-termini provided that the penultimate residue is proline. The polypeptide is Dipeptidyl peptidase 4 (Dpp4) (Rattus norvegicus (Rat)).